Consider the following 645-residue polypeptide: Octopamine receptor Oamb (645 aa).

The Extracellular segment spans residues 1–25 (MNETECEDLIKSVKWTEPANLISLA). N2 carries an N-linked (GlcNAc...) asparagine glycan. Residues 26 to 46 (VLEFINVLVIGGNCLVIAAVF) traverse the membrane as a helical segment. At 47-56 (CSNKLRSVTN) the chain is on the cytoplasmic side. A helical membrane pass occupies residues 57–77 (FFIVNLAVADLLVGLAVLPFS). The Extracellular portion of the chain corresponds to 78–94 (ATWEVFKVWIFGDLWCR). Cysteines 93 and 287 form a disulfide. The helical transmembrane segment at 95-115 (IWLAVDVWMCTASILNLCAIS) threads the bilayer. At 116-138 (LDRYVAVTRPVTYPSIMSTKKAK) the chain is on the cytoplasmic side. Residues 139 to 159 (SLIAGIWVLSFFICFPPLVGW) form a helical membrane-spanning segment. Topologically, residues 160-295 (KDQKAVIQPT…KCELTNDRGY (136 aa)) are extracellular. A glycan (N-linked (GlcNAc...) asparagine) is linked at N174. Positions 190-212 (QLGLDSIKDQGEASLPPSPPHIG) are disordered. A helical membrane pass occupies residues 296–316 (VLYSALGSFYIPMFVMLFFYW). The Cytoplasmic portion of the chain corresponds to 317–520 (RIYRAAVRTT…FRMETKAAKT (204 aa)). Disordered stretches follow at residues 358 to 386 (GRGSNQQDSMHSNGSTQSTTTTLGTPSPE) and 479 to 500 (RQSNTSEAGGSGHSRPANKKMG). Residues 369–385 (SNGSTQSTTTTLGTPSP) show a composition bias toward low complexity. A helical transmembrane segment spans residues 521–541 (LAIIVGMFIFCWCPFFTMYII). Residues 542-551 (RPFCQDCVDP) lie on the Extracellular side of the membrane. The helical transmembrane segment at 552–572 (LLFSVLFWLGYCNSAVNPMIY) threads the bilayer. Residues 573–645 (ALFSKDFRFA…HHSEMSNDPR (73 aa)) lie on the Cytoplasmic side of the membrane. Residues 621–645 (TPSAAAHSFGDESELHHSEMSNDPR) are disordered. The span at 629–645 (FGDESELHHSEMSNDPR) shows a compositional bias: basic and acidic residues.

It belongs to the G-protein coupled receptor 1 family. Highly enriched in mushroom body neuropil and in the ellipsoid body (at protein level). Expressed in oviduct epithelium (at protein level). Expressed in the adult and larval brain, thoracic and abdominal ganglia, terminal cells of the larval tracheal system, muscle, mature eggs and reproductive system.

The protein localises to the cell membrane. Receptor for octopamine (OA) which is a neurotransmitter, neurohormone and neuromodulator in invertebrates. Stimulates intracellular accumulation of cAMP and Ca(2+) following ligand binding. Required for ovulation. Following activation on mature follicle cells by OA, induces activity of the metalloprotease Mmp2 which leads to breakdown of the posterior follicle wall, resulting in ovulation. Ligand binding probably also leads to activation of CamKII which is also required for ovulation. Modulates sleep/wake behavior by acting in neurons of the pars intercerebralis to promote wakefulness. Plays a role in courtship conditioning where the courtship behavior of males rejected by already mated females is inhibited with further females. Required in the mushroom body for appetitive olfactory learning. Specifically conveys the short-term reinforcing effects of sweet taste. In insulin-producing cells of the brain, plays a role in inhibiting transcription of insulin-like peptide Ilp3. Also plays a role in social behavior by modulating male agression. This Drosophila melanogaster (Fruit fly) protein is Octopamine receptor Oamb.